Here is a 248-residue protein sequence, read N- to C-terminus: Methionine aminopeptidase 1 (248 aa).

His-77 contacts substrate. Residues Asp-94, Asp-105, and His-168 each coordinate a divalent metal cation. His-175 contributes to the substrate binding site. The a divalent metal cation site is built by Glu-201 and Glu-232.

In terms of assembly, monomer. The cofactor is Co(2+). Zn(2+) serves as cofactor. Mn(2+) is required as a cofactor. It depends on Fe(2+) as a cofactor.

Its subcellular location is the cytoplasm. The enzyme catalyses Release of N-terminal amino acids, preferentially methionine, from peptides and arylamides.. In terms of biological role, removes the N-terminal methionine from nascent proteins. The N-terminal methionine is often cleaved when the second residue in the primary sequence is small and uncharged (Met-Ala-, Cys, Gly, Pro, Ser, Thr, or Val). Requires deformylation of the N(alpha)-formylated initiator methionine before it can be hydrolyzed. In Bacillus subtilis (strain 168), this protein is Methionine aminopeptidase 1.